Consider the following 239-residue polypeptide: Leucyl/phenylalanyl-tRNA--protein transferase (239 aa).

Belongs to the L/F-transferase family.

It localises to the cytoplasm. It catalyses the reaction N-terminal L-lysyl-[protein] + L-leucyl-tRNA(Leu) = N-terminal L-leucyl-L-lysyl-[protein] + tRNA(Leu) + H(+). It carries out the reaction N-terminal L-arginyl-[protein] + L-leucyl-tRNA(Leu) = N-terminal L-leucyl-L-arginyl-[protein] + tRNA(Leu) + H(+). The catalysed reaction is L-phenylalanyl-tRNA(Phe) + an N-terminal L-alpha-aminoacyl-[protein] = an N-terminal L-phenylalanyl-L-alpha-aminoacyl-[protein] + tRNA(Phe). Functionally, functions in the N-end rule pathway of protein degradation where it conjugates Leu, Phe and, less efficiently, Met from aminoacyl-tRNAs to the N-termini of proteins containing an N-terminal arginine or lysine. This Aliivibrio fischeri (strain MJ11) (Vibrio fischeri) protein is Leucyl/phenylalanyl-tRNA--protein transferase.